Here is a 375-residue protein sequence, read N- to C-terminus: Succinyl-diaminopimelate desuccinylase (375 aa).

Residue histidine 66 coordinates Zn(2+). Aspartate 68 is an active-site residue. Aspartate 99 contributes to the Zn(2+) binding site. Residue glutamate 133 is the Proton acceptor of the active site. Residues glutamate 134, glutamate 162, and histidine 348 each contribute to the Zn(2+) site.

This sequence belongs to the peptidase M20A family. DapE subfamily. Homodimer. The cofactor is Zn(2+). Co(2+) serves as cofactor.

The catalysed reaction is N-succinyl-(2S,6S)-2,6-diaminopimelate + H2O = (2S,6S)-2,6-diaminopimelate + succinate. Its pathway is amino-acid biosynthesis; L-lysine biosynthesis via DAP pathway; LL-2,6-diaminopimelate from (S)-tetrahydrodipicolinate (succinylase route): step 3/3. Functionally, catalyzes the hydrolysis of N-succinyl-L,L-diaminopimelic acid (SDAP), forming succinate and LL-2,6-diaminopimelate (DAP), an intermediate involved in the bacterial biosynthesis of lysine and meso-diaminopimelic acid, an essential component of bacterial cell walls. This chain is Succinyl-diaminopimelate desuccinylase, found in Shigella flexneri serotype 5b (strain 8401).